Here is an 80-residue protein sequence, read N- to C-terminus: GNCIELNNDCDGSKDDCQCCRDNAYCSCYNFFGIKSGCKCSVGNSGTGYSVCLKKLECPNRRAWTSWKKECTKPCIGKRC.

7 cysteine pairs are disulfide-bonded: C3–C20, C10–C26, C17–C52, C19–C40, C28–C38, C58–C71, and C75–C80.

Expressed by the venom gland.

It is found in the secreted. Functionally, omega-agatoxin are antagonists of voltage-gated calcium channels (Cav). Induces rapid general flaccid paralysis followed by death when injected into the cerebral ventricle of mice at dose levels of 3 ug per mouse. The protein is U20-ctenitoxin-Pn1a of Phoneutria nigriventer (Brazilian armed spider).